The following is a 152-amino-acid chain: Xanthine-guanine phosphoribosyltransferase (152 aa).

5-phospho-alpha-D-ribose 1-diphosphate is bound by residues 37-38, arginine 69, and 88-96; these read RG and DDLVDTGGT. Arginine 69 contributes to the GMP binding site. Aspartate 89 contributes to the Mg(2+) binding site. Guanine contacts are provided by aspartate 92 and isoleucine 135. Residues aspartate 92 and isoleucine 135 each contribute to the xanthine site. GMP contacts are provided by residues 92 to 96 and 134 to 135; these read DTGGT and WI.

This sequence belongs to the purine/pyrimidine phosphoribosyltransferase family. XGPT subfamily. Homotetramer. It depends on Mg(2+) as a cofactor.

It localises to the cell inner membrane. It catalyses the reaction GMP + diphosphate = guanine + 5-phospho-alpha-D-ribose 1-diphosphate. The enzyme catalyses XMP + diphosphate = xanthine + 5-phospho-alpha-D-ribose 1-diphosphate. The catalysed reaction is IMP + diphosphate = hypoxanthine + 5-phospho-alpha-D-ribose 1-diphosphate. The protein operates within purine metabolism; GMP biosynthesis via salvage pathway; GMP from guanine: step 1/1. It participates in purine metabolism; XMP biosynthesis via salvage pathway; XMP from xanthine: step 1/1. In terms of biological role, purine salvage pathway enzyme that catalyzes the transfer of the ribosyl-5-phosphate group from 5-phospho-alpha-D-ribose 1-diphosphate (PRPP) to the N9 position of the 6-oxopurines guanine and xanthine to form the corresponding ribonucleotides GMP (guanosine 5'-monophosphate) and XMP (xanthosine 5'-monophosphate), with the release of PPi. To a lesser extent, also acts on hypoxanthine. The chain is Xanthine-guanine phosphoribosyltransferase from Pectobacterium carotovorum subsp. carotovorum (strain PC1).